A 369-amino-acid chain; its full sequence is Anhydro-N-acetylmuramic acid kinase (369 aa).

12–19 (GTSLDGVD) serves as a coordination point for ATP.

The protein belongs to the anhydro-N-acetylmuramic acid kinase family.

It carries out the reaction 1,6-anhydro-N-acetyl-beta-muramate + ATP + H2O = N-acetyl-D-muramate 6-phosphate + ADP + H(+). It participates in amino-sugar metabolism; 1,6-anhydro-N-acetylmuramate degradation. The protein operates within cell wall biogenesis; peptidoglycan recycling. Catalyzes the specific phosphorylation of 1,6-anhydro-N-acetylmuramic acid (anhMurNAc) with the simultaneous cleavage of the 1,6-anhydro ring, generating MurNAc-6-P. Is required for the utilization of anhMurNAc either imported from the medium or derived from its own cell wall murein, and thus plays a role in cell wall recycling. This is Anhydro-N-acetylmuramic acid kinase from Escherichia coli O1:K1 / APEC.